The primary structure comprises 428 residues: tRNA modification GTPase MnmE (428 aa).

Residues R20, E76, and R116 each coordinate (6S)-5-formyl-5,6,7,8-tetrahydrofolate. One can recognise a TrmE-type G domain in the interval 212–351; it reads GFEVAIVGAP…LVAAIGERLL (140 aa). Residue N222 participates in K(+) binding. GTP-binding positions include 222 to 227, 241 to 247, and 266 to 269; these read NAGKST, SEIAGTT, and DTAG. Mg(2+) is bound at residue S226. 3 residues coordinate K(+): S241, I243, and T246. Residue T247 coordinates Mg(2+). A (6S)-5-formyl-5,6,7,8-tetrahydrofolate-binding site is contributed by K428.

This sequence belongs to the TRAFAC class TrmE-Era-EngA-EngB-Septin-like GTPase superfamily. TrmE GTPase family. As to quaternary structure, homodimer. Heterotetramer of two MnmE and two MnmG subunits. The cofactor is K(+).

The protein localises to the cytoplasm. Its function is as follows. Exhibits a very high intrinsic GTPase hydrolysis rate. Involved in the addition of a carboxymethylaminomethyl (cmnm) group at the wobble position (U34) of certain tRNAs, forming tRNA-cmnm(5)s(2)U34. In Cereibacter sphaeroides (strain ATCC 17029 / ATH 2.4.9) (Rhodobacter sphaeroides), this protein is tRNA modification GTPase MnmE.